The primary structure comprises 65 residues: MPKIKTRRCAAKRFSVTGSGKFKRRRKNMRHILTKKASKRKMQLGQPALVDKTNEKAVKRMLPYA.

It belongs to the bacterial ribosomal protein bL35 family.

The polypeptide is Large ribosomal subunit protein bL35 (Oleidesulfovibrio alaskensis (strain ATCC BAA-1058 / DSM 17464 / G20) (Desulfovibrio alaskensis)).